Reading from the N-terminus, the 1119-residue chain is Multiple epidermal growth factor-like domains protein 10 (1119 aa).

An N-terminal signal peptide occupies residues 1–22 (MMSSCGPLLLAVSCCLVALTSS). Topologically, residues 23–851 (LNLDDPNVCS…ALPMDSYQIG (829 aa)) are extracellular. An EMI domain is found at 27–104 (DPNVCSHWES…FYESGDICVP (78 aa)). 15 disulfides stabilise this stretch: cysteine 31–cysteine 92, cysteine 57–cysteine 66, cysteine 91–cysteine 102, cysteine 102–cysteine 115, cysteine 106–cysteine 121, cysteine 123–cysteine 132, cysteine 145–cysteine 157, cysteine 151–cysteine 164, cysteine 166–cysteine 175, cysteine 188–cysteine 200, cysteine 194–cysteine 207, cysteine 209–cysteine 218, cysteine 231–cysteine 243, cysteine 237–cysteine 250, and cysteine 252–cysteine 260. EGF-like domains lie at 98-133 (SGDI…ADCS), 141-176 (WGPH…WRCE), 184-219 (YGNN…AFCE), and 227-261 (HGQQ…MVCG). Residue asparagine 197 is glycosylated (N-linked (GlcNAc...) asparagine). Residue asparagine 272 is glycosylated (N-linked (GlcNAc...) asparagine). 2 EGF-like domains span residues 274–304 (SQEC…ERCQ) and 312–347 (YGIG…ESCE). 6 disulfide bridges follow: cysteine 277/cysteine 285, cysteine 279/cysteine 292, cysteine 294/cysteine 303, cysteine 316/cysteine 328, cysteine 322/cysteine 335, and cysteine 337/cysteine 346. Asparagine 369 and asparagine 393 each carry an N-linked (GlcNAc...) asparagine glycan. 9 EGF-like domains span residues 401 to 436 (YGEA…SDCA), 444 to 479 (YGIN…VDCS), 487 to 522 (WGLG…DRCD), 573 to 608 (WGPN…TTCQ), 616 to 653 (FGHR…ALCN), 666 to 696 (GGSC…SDCS), 709 to 739 (IHTC…LYCT), 747 to 782 (YGKD…RHCE), and 795 to 825 (RQVC…TRCD). Cystine bridges form between cysteine 405–cysteine 417, cysteine 411–cysteine 424, and cysteine 426–cysteine 435. An N-linked (GlcNAc...) asparagine glycan is attached at asparagine 447. Disulfide bonds link cysteine 448/cysteine 460, cysteine 454/cysteine 467, cysteine 469/cysteine 478, cysteine 491/cysteine 503, cysteine 497/cysteine 510, and cysteine 512/cysteine 521. Asparagine 492 carries an N-linked (GlcNAc...) asparagine glycan. Residue asparagine 576 is glycosylated (N-linked (GlcNAc...) asparagine). 18 cysteine pairs are disulfide-bonded: cysteine 577-cysteine 589, cysteine 583-cysteine 596, cysteine 598-cysteine 607, cysteine 620-cysteine 634, cysteine 624-cysteine 641, cysteine 643-cysteine 652, cysteine 669-cysteine 677, cysteine 671-cysteine 684, cysteine 686-cysteine 695, cysteine 712-cysteine 720, cysteine 714-cysteine 727, cysteine 729-cysteine 738, cysteine 751-cysteine 763, cysteine 757-cysteine 770, cysteine 772-cysteine 781, cysteine 798-cysteine 806, cysteine 800-cysteine 813, and cysteine 815-cysteine 824. Residue asparagine 674 is glycosylated (N-linked (GlcNAc...) asparagine). N-linked (GlcNAc...) asparagine glycosylation occurs at asparagine 803. The helical transmembrane segment at 852-872 (AITGIIILVLLVLILLLLFII) threads the bilayer. Topologically, residues 873–1119 (YRKKQKGKES…SSPSPTEDSK (247 aa)) are cytoplasmic.

The protein belongs to the MEGF family.

Its subcellular location is the cell membrane. Membrane receptor involved in phagocytosis by macrophages and astrocytes of apoptotic cells. Essential factor in the regulation of muscle development including myogenesis. Likely plays a key role in muscle cell proliferation, adhesion and motility. May control the balance between skeletal muscle satellite cells proliferation and differentiation through regulation of the notch signaling pathway. The protein is Multiple epidermal growth factor-like domains protein 10 of Danio rerio (Zebrafish).